The chain runs to 470 residues: Diaminobutyrate--2-oxoglutarate aminotransferase (470 aa).

K304 is modified (N6-(pyridoxal phosphate)lysine).

Belongs to the class-III pyridoxal-phosphate-dependent aminotransferase family. Requires pyridoxal 5'-phosphate as cofactor.

It carries out the reaction L-2,4-diaminobutanoate + 2-oxoglutarate = L-aspartate 4-semialdehyde + L-glutamate. It functions in the pathway siderophore biosynthesis; rhizobactin biosynthesis. This Rhizobium meliloti (strain 1021) (Ensifer meliloti) protein is Diaminobutyrate--2-oxoglutarate aminotransferase (rhbA).